The sequence spans 64 residues: Large ribosomal subunit protein bL35 (64 aa).

Belongs to the bacterial ribosomal protein bL35 family.

The sequence is that of Large ribosomal subunit protein bL35 from Clavibacter michiganensis subsp. michiganensis (strain NCPPB 382).